Reading from the N-terminus, the 340-residue chain is Probable allantoicase (340 aa).

Belongs to the allantoicase family.

It catalyses the reaction allantoate + H2O = (S)-ureidoglycolate + urea. The protein operates within nitrogen metabolism; (S)-allantoin degradation; (S)-ureidoglycolate from allantoate (aminidohydrolase route): step 1/1. This Rhizobium meliloti (strain 1021) (Ensifer meliloti) protein is Probable allantoicase.